The chain runs to 765 residues: Single-minded homolog 1 (765 aa).

The region spanning 1-53 is the bHLH domain; sequence MKEKSKNAARTRREKENSEFYELAKLLPLPSAITSQLDKASIIRLTTSYLKMR. 2 consecutive PAS domains span residues 77–147 and 218–288; these read GREL…QPYH and PPSA…LVKG. Residues 292–335 form the PAC domain; it reads TKYYRFLAKQGGWVWVQSYATIVHNSRSSRPHCIVSVNYVLTDT. A Single-minded C-terminal domain is found at 336 to 765; sequence EYKGLQLSLD…GTSVIITNGS (430 aa). Low complexity-rich tracts occupy residues 352-365 and 373-385; these read PTFS…PTIS and SRLS…SRTS. 2 disordered regions span residues 352–428 and 527–560; these read PTFS…PGSQ and WDED…PHEP. Positions 368 to 387 match the Nuclear localization signal motif; sequence RKGAKSRLSSSKSKSRTSPY. Basic and acidic residues predominate over residues 394 to 404; it reads HTERSESDHDS.

Efficient DNA binding requires dimerization with another bHLH protein. Heterodimer; forms a heterodimer with ARNT, ARNT2. In terms of tissue distribution, detected in lung, skeletal muscle and kidney. During fetal development it is found in the CNS, developing kidney, mesodermal and endodermal tissues, including developing somites, mesonephric duct, and foregut.

The protein resides in the nucleus. In terms of biological role, transcriptional factor that may have pleiotropic effects during embryogenesis and in the adult. This chain is Single-minded homolog 1 (Sim1), found in Mus musculus (Mouse).